The chain runs to 127 residues: MHQDDYYPQPSLLVNGSLDQEPQRQLPDMPPRGGDGLPLLAAIIAAFVLLAICIVLAVHFGPALHQGQATLLTEPPALKPENGVYLIHWRLLSLQDSHRESQQGLFIPHSGPALDGHRPSIDEVTYL.

Residue asparagine 15 is glycosylated (N-linked (GlcNAc...) asparagine). A helical transmembrane segment spans residues proline 38–valine 58.

The protein resides in the membrane. The sequence is that of Small integral membrane protein 33 from Mus musculus (Mouse).